A 191-amino-acid polypeptide reads, in one-letter code: Holliday junction branch migration complex subunit RuvA (191 aa).

Residues 1–64 form a domain I region; sequence MIGSITGNVE…DNITQLYGFL (64 aa). The interval 65 to 142 is domain II; the sequence is NRQEQDYLKM…KMPIEETFSI (78 aa). The segment at 143-146 is flexible linker; it reads IEND. The segment at 146–191 is domain III; that stretch reads DDSLAALISLGYEKLKAFNVIQEIKSKTPDASTQEVIRKALQKLSQ.

It belongs to the RuvA family. Homotetramer. Forms an RuvA(8)-RuvB(12)-Holliday junction (HJ) complex. HJ DNA is sandwiched between 2 RuvA tetramers; dsDNA enters through RuvA and exits via RuvB. An RuvB hexamer assembles on each DNA strand where it exits the tetramer. Each RuvB hexamer is contacted by two RuvA subunits (via domain III) on 2 adjacent RuvB subunits; this complex drives branch migration. In the full resolvosome a probable DNA-RuvA(4)-RuvB(12)-RuvC(2) complex forms which resolves the HJ.

It localises to the cytoplasm. The RuvA-RuvB-RuvC complex processes Holliday junction (HJ) DNA during genetic recombination and DNA repair, while the RuvA-RuvB complex plays an important role in the rescue of blocked DNA replication forks via replication fork reversal (RFR). RuvA specifically binds to HJ cruciform DNA, conferring on it an open structure. The RuvB hexamer acts as an ATP-dependent pump, pulling dsDNA into and through the RuvAB complex. HJ branch migration allows RuvC to scan DNA until it finds its consensus sequence, where it cleaves and resolves the cruciform DNA. The polypeptide is Holliday junction branch migration complex subunit RuvA (Ehrlichia ruminantium (strain Welgevonden)).